Reading from the N-terminus, the 1300-residue chain is Histone-lysine N-methyltransferase Suv4-20 (1300 aa).

The tract at residues M1–N136 is disordered. The segment covering G14–S62 has biased composition (low complexity). Residues Q79 to Y97 show a composition bias toward polar residues. Over residues G116–S128 the composition is skewed to gly residues. In terms of domain architecture, SET spans E255 to G366. 5 disordered regions span residues S432 to A490, Q535 to A574, H669 to R744, N756 to I856, and A891 to L927. A compositionally biased stretch (low complexity) spans N435 to T451. The segment covering G452–L462 has biased composition (polar residues). A compositionally biased stretch (basic residues) spans Q536 to G557. Positions A564–A574 are enriched in low complexity. Basic and acidic residues-rich tracts occupy residues R677 to D688, Q698 to D707, and Q722 to K735. Positions N756 to E821 are enriched in low complexity. Polar residues-rich tracts occupy residues N822–P834 and E911–N923. S831 and S833 each carry phosphoserine. Phosphothreonine is present on T930. 4 disordered regions span residues S956–G988, E1006–K1188, S1212–G1233, and Q1263–K1300. A compositionally biased stretch (acidic residues) spans N1009–E1029. Residues K1041 to Q1055 show a composition bias toward basic residues. Composition is skewed to low complexity over residues A1117–A1145 and S1161–T1178. Over residues S1289 to K1300 the composition is skewed to basic residues.

This sequence belongs to the class V-like SAM-binding methyltransferase superfamily. Histone-lysine methyltransferase family. Suvar4-20 subfamily.

Its subcellular location is the nucleus. It is found in the chromosome. It carries out the reaction L-lysyl(20)-[histone H4] + S-adenosyl-L-methionine = N(6)-methyl-L-lysyl(20)-[histone H4] + S-adenosyl-L-homocysteine + H(+). It catalyses the reaction N(6)-methyl-L-lysyl(20)-[histone H4] + S-adenosyl-L-methionine = N(6),N(6)-dimethyl-L-lysyl(20)-[histone H4] + S-adenosyl-L-homocysteine + H(+). The enzyme catalyses N(6),N(6)-dimethyl-L-lysyl(20)-[histone H4] + S-adenosyl-L-methionine = N(6),N(6),N(6)-trimethyl-L-lysyl(20)-[histone H4] + S-adenosyl-L-homocysteine + H(+). Functionally, histone methyltransferase that specifically trimethylates 'Lys-20' of histone H4. H4 'Lys-20' trimethylation represents a specific tag for epigenetic transcriptional repression. Mainly functions in pericentric heterochromatin regions, thereby playing a central role in the establishment of constitutive heterochromatin in these regions. Acts as a dominant suppressor of position-effect variegation. This is Histone-lysine N-methyltransferase Suv4-20 (Hmt4-20) from Drosophila melanogaster (Fruit fly).